The sequence spans 417 residues: Voltage-gated ClC-type chloride channel ClcB (417 aa).

A run of 11 helical transmembrane segments spans residues 5–25 (LLIA…FRHA), 54–74 (LITP…WQKM), 146–166 (LWIA…PLAG), 168–188 (LFIA…PVVI), 190–210 (AVVA…LYTV), 222–242 (AMII…MWLM), 258–278 (WQLA…PAVW), 288–308 (FLLS…KLLA), 316–336 (GAPG…GMLY), 339–359 (MWGF…LTGM), and 380–400 (MTGE…ASVL).

It belongs to the chloride channel (TC 2.A.49) family. ClcB subfamily.

It localises to the cell inner membrane. Probably acts as an electrical shunt for an outwardly-directed proton pump that is linked to amino acid decarboxylation, as part of the extreme acid resistance (XAR) response. This chain is Voltage-gated ClC-type chloride channel ClcB, found in Citrobacter koseri (strain ATCC BAA-895 / CDC 4225-83 / SGSC4696).